A 124-amino-acid chain; its full sequence is Fluoride-specific ion channel FluC (124 aa).

4 consecutive transmembrane segments (helical) span residues 1-21 (MGVV…RFLL), 35-55 (VGTL…FAYL), 68-88 (LLIT…YESF), and 99-119 (FLAY…LGYI). The Na(+) site is built by glycine 75 and threonine 78.

The protein belongs to the fluoride channel Fluc/FEX (TC 1.A.43) family.

It is found in the cell inner membrane. It catalyses the reaction fluoride(in) = fluoride(out). Na(+) is not transported, but it plays an essential structural role and its presence is essential for fluoride channel function. In terms of biological role, fluoride-specific ion channel. Important for reducing fluoride concentration in the cell, thus reducing its toxicity. This Aquifex aeolicus (strain VF5) protein is Fluoride-specific ion channel FluC.